A 259-amino-acid chain; its full sequence is Ribosomal RNA small subunit methyltransferase J (259 aa).

S-adenosyl-L-methionine is bound by residues 101 to 102, 117 to 118, 153 to 154, and aspartate 176; these read RD, ER, and SS.

It belongs to the methyltransferase superfamily. RsmJ family.

It localises to the cytoplasm. It catalyses the reaction guanosine(1516) in 16S rRNA + S-adenosyl-L-methionine = N(2)-methylguanosine(1516) in 16S rRNA + S-adenosyl-L-homocysteine + H(+). Functionally, specifically methylates the guanosine in position 1516 of 16S rRNA. This is Ribosomal RNA small subunit methyltransferase J from Vibrio campbellii (strain ATCC BAA-1116).